The chain runs to 235 residues: Transmembrane protein 215 (235 aa).

Transmembrane regions (helical) follow at residues 12–32 and 40–60; these read LVVALVSVFLVFGFMFTVSGM and IPLLAIGPAICLPGIAAIALA. The tract at residues 99-145 is disordered; sequence SDLESGKGSSDELAKKAGLRGKPPPQSQGEVSVASSINSPTPTEEGE. The span at 125–140 shows a compositional bias: polar residues; it reads SQGEVSVASSINSPTP.

It is found in the membrane. The sequence is that of Transmembrane protein 215 (TMEM215) from Homo sapiens (Human).